A 110-amino-acid polypeptide reads, in one-letter code: MQPGGQPDMSALLAQAQQVQQQLMEAQEALANAEVNGQAGGGLVQVTMRGSGEVVAVRIDPKVVDPSDVETLQDLIVGAVADAAKQVTILAHDRLGPLAGGMGGLGLPGM.

Belongs to the YbaB/EbfC family. Homodimer.

It is found in the cytoplasm. Its subcellular location is the nucleoid. Functionally, binds to DNA and alters its conformation. May be involved in regulation of gene expression, nucleoid organization and DNA protection. The protein is Nucleoid-associated protein Mvan_5528 of Mycolicibacterium vanbaalenii (strain DSM 7251 / JCM 13017 / BCRC 16820 / KCTC 9966 / NRRL B-24157 / PYR-1) (Mycobacterium vanbaalenii).